Consider the following 87-residue polypeptide: Small ribosomal subunit protein uS15 (87 aa).

A disordered region spans residues M1 to S22.

It belongs to the universal ribosomal protein uS15 family. In terms of assembly, part of the 30S ribosomal subunit. Forms a bridge to the 50S subunit in the 70S ribosome, contacting the 23S rRNA.

Functionally, one of the primary rRNA binding proteins, it binds directly to 16S rRNA where it helps nucleate assembly of the platform of the 30S subunit by binding and bridging several RNA helices of the 16S rRNA. Its function is as follows. Forms an intersubunit bridge (bridge B4) with the 23S rRNA of the 50S subunit in the ribosome. This chain is Small ribosomal subunit protein uS15, found in Leptothrix cholodnii (strain ATCC 51168 / LMG 8142 / SP-6) (Leptothrix discophora (strain SP-6)).